Here is a 530-residue protein sequence, read N- to C-terminus: Lanosterol 14-alpha demethylase CYP51 (530 aa).

The Lumenal segment spans residues 1–20 (MSATKSIVGEALEYVNIGLS). Residues 21 to 41 (HFLALPLAQRISLIIIIPFIY) traverse the membrane as a helical segment. At 42-530 (NIVWQLLYSL…WEKRNPEQKI (489 aa)) the chain is on the cytoplasmic side. Lys116 is covalently cross-linked (Glycyl lysine isopeptide (Lys-Gly) (interchain with G-Cter in ubiquitin)). Lanosterol is bound at residue Tyr126. Residue Gly314 participates in itraconazole binding. Glycyl lysine isopeptide (Lys-Gly) (interchain with G-Cter in ubiquitin) cross-links involve residues Lys353 and Lys454. Ser458 is subject to Phosphoserine. Residue Cys470 participates in heme binding.

It belongs to the cytochrome P450 family. In terms of assembly, interacts with ERG28. Heme serves as cofactor.

The protein localises to the endoplasmic reticulum membrane. It carries out the reaction a 14alpha-methyl steroid + 3 reduced [NADPH--hemoprotein reductase] + 3 O2 = a Delta(14) steroid + formate + 3 oxidized [NADPH--hemoprotein reductase] + 4 H2O + 4 H(+). The catalysed reaction is a 14alpha-methyl steroid + reduced [NADPH--hemoprotein reductase] + O2 = a 14alpha-hydroxymethyl steroid + oxidized [NADPH--hemoprotein reductase] + H2O + H(+). It catalyses the reaction a 14alpha-hydroxymethyl steroid + reduced [NADPH--hemoprotein reductase] + O2 = a 14alpha-formyl steroid + oxidized [NADPH--hemoprotein reductase] + 2 H2O + H(+). The enzyme catalyses a 14alpha-formyl steroid + reduced [NADPH--hemoprotein reductase] + O2 = a Delta(14) steroid + formate + oxidized [NADPH--hemoprotein reductase] + H2O + 2 H(+). It carries out the reaction lanosterol + 3 reduced [NADPH--hemoprotein reductase] + 3 O2 = 4,4-dimethyl-5alpha-cholesta-8,14,24-trien-3beta-ol + formate + 3 oxidized [NADPH--hemoprotein reductase] + 4 H2O + 4 H(+). The catalysed reaction is lanosterol + reduced [NADPH--hemoprotein reductase] + O2 = 32-hydroxylanosterol + oxidized [NADPH--hemoprotein reductase] + H2O + H(+). It catalyses the reaction 32-hydroxylanosterol + reduced [NADPH--hemoprotein reductase] + O2 = 32-oxolanosterol + oxidized [NADPH--hemoprotein reductase] + 2 H2O + H(+). The enzyme catalyses 32-oxolanosterol + reduced [NADPH--hemoprotein reductase] + O2 = 4,4-dimethyl-5alpha-cholesta-8,14,24-trien-3beta-ol + formate + oxidized [NADPH--hemoprotein reductase] + H2O + 2 H(+). The protein operates within steroid biosynthesis; zymosterol biosynthesis; zymosterol from lanosterol: step 1/6. In terms of biological role, sterol 14alpha-demethylase that plays a critical role in the third module of ergosterol biosynthesis pathway, being ergosterol the major sterol component in fungal membranes that participates in a variety of functions. The third module or late pathway involves the ergosterol synthesis itself through consecutive reactions that mainly occur in the endoplasmic reticulum (ER) membrane. Starting from lanosterol (lanosta-8,24-dien-3beta-ol), it catalyzes the three-step oxidative removal of the 14alpha-methyl group (C-32) of the sterol in the form of formate, and converts the sterol to 4,4-dimethyl-5alpha-cholesta-8,14,24-trien-3beta-ol, which is critical for ergosterol biosynthesis. Can demethylate substrates not intrinsic to yeast, such as eburicol (24-methylene-24,25-dihydrolanosterol) at a similar rate to lanosterol, and at a lower rate the 24,25-dihydrolanosterol (DHL) to 4,4-dimethyl-8,14-cholestadien-3beta-ol. This Saccharomyces cerevisiae (strain ATCC 204508 / S288c) (Baker's yeast) protein is Lanosterol 14-alpha demethylase CYP51.